The primary structure comprises 556 residues: Acetyl-coenzyme A thioesterase (556 aa).

The HotDog ACOT-type 1 domain maps to 6 to 118 (APGEVLMSQA…FSTFVAKPVG (113 aa)). K34 carries the N6-succinyllysine modification. CoA contacts are provided by residues 54-56 (TAS) and 83-85 (STS). K97 is subject to N6-succinyllysine. R145 is a binding site for CoA. N6-succinyllysine is present on residues K160 and K229. The HotDog ACOT-type 2 domain maps to 180–295 (MGTSVQSIEL…FLIYNAVDDQ (116 aa)). 235–237 (KFR) is a binding site for CoA. The region spanning 327 to 536 (GRKYVISHKK…GGWSKSIEEA (210 aa)) is the START domain.

In terms of assembly, homodimer or homotetramer.

The protein localises to the cytoplasm. The protein resides in the cytosol. It carries out the reaction acetyl-CoA + H2O = acetate + CoA + H(+). The enzyme catalyses butanoyl-CoA + H2O = butanoate + CoA + H(+). It catalyses the reaction hexanoyl-CoA + H2O = hexanoate + CoA + H(+). It participates in lipid metabolism; fatty acid metabolism. With respect to regulation, allosterically regulated by ATP (activator) and ADP (inhibitor). Cold labile, it dissociates into inactive monomers at low temperature. Catalyzes the hydrolysis of acyl-CoAs into free fatty acids and coenzyme A (CoASH), regulating their respective intracellular levels. Preferentially hydrolyzes acetyl-CoA. This chain is Acetyl-coenzyme A thioesterase (Acot12), found in Mus musculus (Mouse).